The primary structure comprises 245 residues: UDP-2,3-diacylglucosamine hydrolase (245 aa).

Residues aspartate 8, histidine 10, aspartate 41, asparagine 79, and histidine 114 each contribute to the Mn(2+) site. Residue 79–80 (NR) coordinates substrate. 5 residues coordinate substrate: aspartate 122, serine 160, lysine 164, lysine 167, and histidine 195. 2 residues coordinate Mn(2+): histidine 195 and histidine 197.

It belongs to the LpxH family. The cofactor is Mn(2+).

Its subcellular location is the cell inner membrane. It catalyses the reaction UDP-2-N,3-O-bis[(3R)-3-hydroxytetradecanoyl]-alpha-D-glucosamine + H2O = 2-N,3-O-bis[(3R)-3-hydroxytetradecanoyl]-alpha-D-glucosaminyl 1-phosphate + UMP + 2 H(+). Its pathway is glycolipid biosynthesis; lipid IV(A) biosynthesis; lipid IV(A) from (3R)-3-hydroxytetradecanoyl-[acyl-carrier-protein] and UDP-N-acetyl-alpha-D-glucosamine: step 4/6. Hydrolyzes the pyrophosphate bond of UDP-2,3-diacylglucosamine to yield 2,3-diacylglucosamine 1-phosphate (lipid X) and UMP by catalyzing the attack of water at the alpha-P atom. Involved in the biosynthesis of lipid A, a phosphorylated glycolipid that anchors the lipopolysaccharide to the outer membrane of the cell. The polypeptide is UDP-2,3-diacylglucosamine hydrolase (Aromatoleum aromaticum (strain DSM 19018 / LMG 30748 / EbN1) (Azoarcus sp. (strain EbN1))).